We begin with the raw amino-acid sequence, 320 residues long: Malate dehydrogenase (320 aa).

Residues 10–15 (GSGMIG) and Asp-34 contribute to the NAD(+) site. Arg-83 and Arg-89 together coordinate substrate. NAD(+) is bound by residues Asn-96 and 119–121 (ITN). Substrate contacts are provided by Asn-121 and Arg-152. Catalysis depends on His-176, which acts as the Proton acceptor.

This sequence belongs to the LDH/MDH superfamily. MDH type 3 family.

The catalysed reaction is (S)-malate + NAD(+) = oxaloacetate + NADH + H(+). Catalyzes the reversible oxidation of malate to oxaloacetate. The polypeptide is Malate dehydrogenase (Brucella abortus (strain S19)).